Reading from the N-terminus, the 193-residue chain is FMN-dependent NADH:quinone oxidoreductase (193 aa).

FMN-binding positions include serine 9, 15–17 (SSS), and 137–140 (TSGG).

Belongs to the azoreductase type 1 family. Homodimer. It depends on FMN as a cofactor.

The enzyme catalyses 2 a quinone + NADH + H(+) = 2 a 1,4-benzosemiquinone + NAD(+). The catalysed reaction is N,N-dimethyl-1,4-phenylenediamine + anthranilate + 2 NAD(+) = 2-(4-dimethylaminophenyl)diazenylbenzoate + 2 NADH + 2 H(+). Quinone reductase that provides resistance to thiol-specific stress caused by electrophilic quinones. In terms of biological role, also exhibits azoreductase activity. Catalyzes the reductive cleavage of the azo bond in aromatic azo compounds to the corresponding amines. This is FMN-dependent NADH:quinone oxidoreductase from Pelagibacter ubique (strain HTCC1062).